The chain runs to 259 residues: Flagellar L-ring protein 1 (259 aa).

The first 15 residues, 1-15 (MKRICLLALITTMSG), serve as a signal peptide directing secretion. Cysteine 16 is lipidated: N-palmitoyl cysteine. Residue cysteine 16 is the site of S-diacylglycerol cysteine attachment. Residues 38 to 63 (EGDKSKDESSGIVDTLRGRNDPVAGD) form a disordered region.

Belongs to the FlgH family. In terms of assembly, the basal body constitutes a major portion of the flagellar organelle and consists of four rings (L,P,S, and M) mounted on a central rod.

It localises to the cell outer membrane. The protein localises to the bacterial flagellum basal body. Its function is as follows. Assembles around the rod to form the L-ring and probably protects the motor/basal body from shearing forces during rotation. The chain is Flagellar L-ring protein 1 (flgH1) from Vibrio parahaemolyticus serotype O3:K6 (strain RIMD 2210633).